A 138-amino-acid polypeptide reads, in one-letter code: Acidic phospholipase A2 BthA-1 (138 aa).

The signal sequence occupies residues 1–16 (MRTLWIMAVLLVGVEG). Cystine bridges form between C42–C131, C44–C60, C59–C111, C65–C138, C66–C104, C73–C97, and C91–C102. 3 residues coordinate Ca(2+): Y43, G47, and G48. The active site involves H63. Position 64 (D64) interacts with Ca(2+). D105 is an active-site residue.

It belongs to the phospholipase A2 family. Group II subfamily. D49 sub-subfamily. As to quaternary structure, homodimer; non-covalently linked. Ca(2+) is required as a cofactor. In terms of tissue distribution, expressed by the venom gland.

It localises to the secreted. The catalysed reaction is a 1,2-diacyl-sn-glycero-3-phosphocholine + H2O = a 1-acyl-sn-glycero-3-phosphocholine + a fatty acid + H(+). With respect to regulation, inhibited by EDTA and bromophenacyl bromide (BPB). Its function is as follows. Snake venom phospholipase A2 (PLA2) that displays edema-inducing activities (activity that is inhibited by EDTA and dexamethasone), inhibits phospholipid-dependent collagen/ADP-induced platelet aggregation, possess hypotensive as well as anticoagulant activities. In addition, this enzyme shows bactericidal activity against E.coli and S.aureus. PLA2 catalyzes the calcium-dependent hydrolysis of the 2-acyl groups in 3-sn-phosphoglycerides. The protein is Acidic phospholipase A2 BthA-1 of Bothrops jararacussu (Jararacussu).